Here is a 293-residue protein sequence, read N- to C-terminus: Undecaprenyl-diphosphatase (293 aa).

The next 6 membrane-spanning stretches (helical) occupy residues 74–94 (VLVF…AGVF), 107–127 (WMII…KDLI), 134–154 (MWIT…AEKM), 209–229 (FLLA…DAFA), 243–263 (VGTL…MKFV), and 271–291 (FAAY…LGML).

It belongs to the UppP family.

The protein resides in the cell membrane. It catalyses the reaction di-trans,octa-cis-undecaprenyl diphosphate + H2O = di-trans,octa-cis-undecaprenyl phosphate + phosphate + H(+). Catalyzes the dephosphorylation of undecaprenyl diphosphate (UPP). Confers resistance to bacitracin. The protein is Undecaprenyl-diphosphatase of Corynebacterium glutamicum (strain ATCC 13032 / DSM 20300 / JCM 1318 / BCRC 11384 / CCUG 27702 / LMG 3730 / NBRC 12168 / NCIMB 10025 / NRRL B-2784 / 534).